The sequence spans 80 residues: MPKKNEAPASFETALSELEHIVTRLESGDLPLEDALNEFERGVQLARQGQAKLQQAEQRVQILLSDNEEASPEPFIADNE.

The protein belongs to the XseB family. As to quaternary structure, heterooligomer composed of large and small subunits.

The protein resides in the cytoplasm. It catalyses the reaction Exonucleolytic cleavage in either 5'- to 3'- or 3'- to 5'-direction to yield nucleoside 5'-phosphates.. In terms of biological role, bidirectionally degrades single-stranded DNA into large acid-insoluble oligonucleotides, which are then degraded further into small acid-soluble oligonucleotides. In Salmonella paratyphi B (strain ATCC BAA-1250 / SPB7), this protein is Exodeoxyribonuclease 7 small subunit.